We begin with the raw amino-acid sequence, 408 residues long: tRNA-specific 2-thiouridylase MnmA (408 aa).

Residues 38–45 (GMSGGVDS) and M64 each bind ATP. Residues 124-126 (NPD) form an interaction with target base in tRNA region. The active-site Nucleophile is the C129. C129 and C231 are oxidised to a cystine. Residue G153 coordinates ATP. Residues 181–183 (KDQ) form an interaction with tRNA region. The active-site Cysteine persulfide intermediate is the C231. Positions 348–349 (RY) are interaction with tRNA.

Belongs to the MnmA/TRMU family.

It localises to the cytoplasm. It carries out the reaction S-sulfanyl-L-cysteinyl-[protein] + uridine(34) in tRNA + AH2 + ATP = 2-thiouridine(34) in tRNA + L-cysteinyl-[protein] + A + AMP + diphosphate + H(+). In terms of biological role, catalyzes the 2-thiolation of uridine at the wobble position (U34) of tRNA, leading to the formation of s(2)U34. In Psychrobacter cryohalolentis (strain ATCC BAA-1226 / DSM 17306 / VKM B-2378 / K5), this protein is tRNA-specific 2-thiouridylase MnmA.